Consider the following 98-residue polypeptide: NADH-ubiquinone oxidoreductase chain 4L (98 aa).

3 helical membrane-spanning segments follow: residues 2-22, 26-46, and 58-79; these read PSTF…TLMF, LMST…MTSV, and PIPI…ALLV.

This sequence belongs to the complex I subunit 4L family. Core subunit of respiratory chain NADH dehydrogenase (Complex I) which is composed of 45 different subunits.

It is found in the mitochondrion inner membrane. The enzyme catalyses a ubiquinone + NADH + 5 H(+)(in) = a ubiquinol + NAD(+) + 4 H(+)(out). Its function is as follows. Core subunit of the mitochondrial membrane respiratory chain NADH dehydrogenase (Complex I) which catalyzes electron transfer from NADH through the respiratory chain, using ubiquinone as an electron acceptor. Part of the enzyme membrane arm which is embedded in the lipid bilayer and involved in proton translocation. This chain is NADH-ubiquinone oxidoreductase chain 4L, found in Mus musculus (Mouse).